A 294-amino-acid chain; its full sequence is Complement C1q tumor necrosis factor-related protein 2 (294 aa).

The first 24 residues, 1-24 (MTIFKKVTTMISWVLLACALPCAA), serve as a signal peptide directing secretion. The segment at 42-156 (QLVCSLPGPQ…PGPCSCGSSR (115 aa)) is disordered. Residues 48-150 (PGPQGPPGPP…KGEPGLPGPC (103 aa)) form the Collagen-like domain. The segment covering 50–59 (PQGPPGPPGA) has biased composition (pro residues). The segment covering 75-87 (DGQDGQDGDRGDS) has biased composition (basic and acidic residues). Residues 105–129 (KGKAGAIGRAGPRGPKGVSGTPGKH) are compositionally biased toward low complexity. The 137-residue stretch at 154 to 290 (SSRAKSAFSV…GFLIYADQGD (137 aa)) folds into the C1q domain.

May interact with ERFE.

It localises to the secreted. In terms of biological role, involved in the regulation of lipid metabolism in adipose tissue and liver. In Mus musculus (Mouse), this protein is Complement C1q tumor necrosis factor-related protein 2 (C1qtnf2).